The following is a 240-amino-acid chain: Probable transcriptional regulatory protein PBPRB1582 (240 aa).

The protein belongs to the TACO1 family.

Its subcellular location is the cytoplasm. The chain is Probable transcriptional regulatory protein PBPRB1582 from Photobacterium profundum (strain SS9).